The chain runs to 243 residues: Urease accessory protein UreF 2 (243 aa).

This sequence belongs to the UreF family. As to quaternary structure, ureD, UreF and UreG form a complex that acts as a GTP-hydrolysis-dependent molecular chaperone, activating the urease apoprotein by helping to assemble the nickel containing metallocenter of UreC. The UreE protein probably delivers the nickel.

It localises to the cytoplasm. In terms of biological role, required for maturation of urease via the functional incorporation of the urease nickel metallocenter. Disrupting the ure2 operon has no effect on urease activity or pathogen survival in BALB/c mice when administered orally. The polypeptide is Urease accessory protein UreF 2 (Brucella abortus (strain 2308)).